The primary structure comprises 184 residues: Photosystem I assembly protein Ycf4 (184 aa).

A run of 2 helical transmembrane segments spans residues 22–42 and 57–77; these read FCWAFILFLGSLGFLLVGTSS and IIFFPQGIVMSFYGIAGLFIS.

It belongs to the Ycf4 family.

It is found in the plastid. Its subcellular location is the chloroplast thylakoid membrane. In terms of biological role, seems to be required for the assembly of the photosystem I complex. The polypeptide is Photosystem I assembly protein Ycf4 (Crucihimalaya wallichii (Rock-cress)).